The sequence spans 20 residues: Haemoporin (20 aa).

The tract at residues 1–20 (AAVPEAAAEATAEAAPVSEF) is disordered.

As to quaternary structure, homopentamer. Forms a cylindrical structure with a central pore. Detected in the hemolymph.

The protein resides in the secreted. The sequence is that of Haemoporin from Aplysia californica (California sea hare).